Reading from the N-terminus, the 65-residue chain is Sec-independent protein translocase protein TatA (65 aa).

Residues 1-21 traverse the membrane as a helical segment; it reads MFGLGGQELVLILLIILLLFG.

It belongs to the TatA/E family. Forms a complex with TatC.

The protein localises to the cell inner membrane. In terms of biological role, part of the twin-arginine translocation (Tat) system that transports large folded proteins containing a characteristic twin-arginine motif in their signal peptide across membranes. TatA could form the protein-conducting channel of the Tat system. This is Sec-independent protein translocase protein TatA from Chlorobium phaeobacteroides (strain DSM 266 / SMG 266 / 2430).